We begin with the raw amino-acid sequence, 461 residues long: Transcription factor SOX-10 (461 aa).

Disordered stretches follow at residues 1–60, 154–191, 205–268, 350–369, and 433–461; these read MADD…ADDD, LRMQHKKDHPDYKYQPRRRKNGKATQGEGEGQVEGEAG, LDHR…DFGN, KAQVKTEGSAPGGHYTDQPS, and AISDPAPSVPQSHSPTHWEQPVYTTLSRP. Positions 30-42 are enriched in polar residues; that stretch reads ASDNSSHLASSGN. Residues 56-96 are dimerization (DIM); that stretch reads EADDDKFPVCIREAVSQVLSGYDWTLVPMPVRVNGSNKSKP. The segment at residues 98–166 is a DNA-binding region (HMG box); sequence VKRPMNAFMV…QHKKDHPDYK (69 aa). Basic and acidic residues predominate over residues 154 to 167; that stretch reads LRMQHKKDHPDYKY. A compositionally biased stretch (gly residues) spans 181–191; it reads EGEGQVEGEAG. Residues 221–306 form a transactivation domain (TAM) region; that stretch reads PEHSSGQSHG…NGHAGHPGHV (86 aa). Residues 247–264 are compositionally biased toward basic and acidic residues; the sequence is ADSKREGRSLGEGGKPHI. Residues 350 to 461 form a transactivation domain (TAC) region; it reads KAQVKTEGSA…QPVYTTLSRP (112 aa). A compositionally biased stretch (polar residues) spans 441-461; it reads VPQSHSPTHWEQPVYTTLSRP.

Its subcellular location is the cytoplasm. It is found in the nucleus. Transcription factor that plays a central role in developing and mature glia. Specifically activates expression of myelin genes, during oligodendrocyte (OL) maturation, thereby playing a central role in oligodendrocyte maturation and CNS myelination. The sequence is that of Transcription factor SOX-10 (SOX10) from Gallus gallus (Chicken).